Reading from the N-terminus, the 1043-residue chain is Integrator complex subunit 3 (1043 aa).

Met1 is modified (N-acetylmethionine). A phosphoserine mark is found at Ser502, Ser537, and Ser995. Residues Tyr977–Asp1043 form a disordered region. The span at Ala1008–Asp1022 shows a compositional bias: acidic residues.

This sequence belongs to the Integrator subunit 3 family. In terms of assembly, component of the Integrator complex, composed of core subunits INTS1, INTS2, INTS3, INTS4, INTS5, INTS6, INTS7, INTS8, INTS9/RC74, INTS10, INTS11/CPSF3L, INTS12, INTS13, INTS14 and INTS15. The core complex associates with protein phosphatase 2A subunits PPP2CA and PPP2R1A, to form the Integrator-PP2A (INTAC) complex. Component of the SOSS complex, composed of SOSS-B (SOSS-B1/NABP2 or SOSS-B2/NABP1), SOSS-A/INTS3 and SOSS-C/INIP. SOSS complexes containing SOSS-B1/NABP2 are more abundant than complexes containing SOSS-B2/NABP1. Interacts with SOSS-B1/NABP2, SOSS-B2/NABP1 and SOSS-C/INIP; the interaction is direct. Interacts with NBN/NBS1.

It localises to the nucleus. It is found in the cytoplasm. Its function is as follows. Component of the integrator complex, a multiprotein complex that terminates RNA polymerase II (Pol II) transcription in the promoter-proximal region of genes. The integrator complex provides a quality checkpoint during transcription elongation by driving premature transcription termination of transcripts that are unfavorably configured for transcriptional elongation: the complex terminates transcription by (1) catalyzing dephosphorylation of the C-terminal domain (CTD) of Pol II subunit POLR2A/RPB1 and SUPT5H/SPT5, (2) degrading the exiting nascent RNA transcript via endonuclease activity and (3) promoting the release of Pol II from bound DNA. The integrator complex is also involved in terminating the synthesis of non-coding Pol II transcripts, such as enhancer RNAs (eRNAs), small nuclear RNAs (snRNAs), telomerase RNAs and long non-coding RNAs (lncRNAs). Within the integrator complex, INTS3 is involved in the post-termination step: INTS3 binds INTS7 in the open conformation of integrator complex and prevents the rebinding of Pol II to the integrator after termination cycle. Mediates recruitment of cytoplasmic dynein to the nuclear envelope, probably as component of the integrator complex. Component of the SOSS complex, a multiprotein complex that functions downstream of the MRN complex to promote DNA repair and G2/M checkpoint. The SOSS complex associates with single-stranded DNA at DNA lesions and influences diverse endpoints in the cellular DNA damage response including cell-cycle checkpoint activation, recombinational repair and maintenance of genomic stability. The SOSS complex is required for efficient homologous recombination-dependent repair of double-strand breaks (DSBs) and ATM-dependent signaling pathways. In the SOSS complex, it is required for the assembly of the complex and for stabilization of the complex at DNA damage sites. In Pongo abelii (Sumatran orangutan), this protein is Integrator complex subunit 3 (INTS3).